A 363-amino-acid chain; its full sequence is Glycerol-3-phosphate dehydrogenase [NAD(+)], cytoplasmic (363 aa).

NAD(+) contacts are provided by residues 11 to 16 (GSGNWG), Phe98, Lys121, and Ala155. Lys121 provides a ligand contact to substrate. The Proton acceptor role is filled by Lys206. Residues Arg270 and Gln299 each contribute to the NAD(+) site. 270-271 (RN) serves as a coordination point for substrate.

It belongs to the NAD-dependent glycerol-3-phosphate dehydrogenase family. In terms of assembly, homodimer. Isoform GPDH-1 is predominant in thorax and isoform GPDH-3 in abdomen.

The protein resides in the cytoplasm. The enzyme catalyses sn-glycerol 3-phosphate + NAD(+) = dihydroxyacetone phosphate + NADH + H(+). It functions in the pathway phospholipid metabolism; alpha-glycerophosphate cycle. In Drosophila melanogaster (Fruit fly), this protein is Glycerol-3-phosphate dehydrogenase [NAD(+)], cytoplasmic.